The primary structure comprises 79 residues: Metallothionein-like protein type 2 (79 aa).

Belongs to the metallothionein superfamily. Type 15 family.

Metallothioneins have a high content of cysteine residues that bind various heavy metals. In Malus domestica (Apple), this protein is Metallothionein-like protein type 2 (MT1).